The sequence spans 352 residues: 26S proteasome regulatory subunit rpn-8 (352 aa).

The region spanning 16-152 (VSVAPLVLLS…TDAYFAVDEI (137 aa)) is the MPN domain. The segment at 303 to 352 (NRQQQEENDAKKKEGENGEKKEGADKKEGSPAAANGESKEKENSPKEKKK) is disordered. Basic and acidic residues-rich tracts occupy residues 306-331 (QQEE…KKEG) and 339-352 (ESKE…EKKK).

The protein belongs to the peptidase M67A family.

In terms of biological role, acts as a regulatory subunit of the 26S proteasome which is involved in the ATP-dependent degradation of ubiquitinated proteins. This is 26S proteasome regulatory subunit rpn-8 (rpn-8) from Neurospora crassa (strain ATCC 24698 / 74-OR23-1A / CBS 708.71 / DSM 1257 / FGSC 987).